The sequence spans 309 residues: MDILERTFKKLTRLKDNLQDLSQEEAYEVFRAILEGKLSDIKTTAFLTAMRIKGETSEELLGVIKAIKERMNFPQKKEDALDLGLNYDGKNRTIYILPSALWLCSRLGVEFTNHYALGAPTKEGVTLYEVVKELGVDMNVSFVDQKNYAPELYKLMPLRRELGFRSLINTVEKFLNPFQTKKIVVSIFHKPYFDKNAELLELLGIEDYTIIKGLEGGIEPLPDRPTLVKKRGKDIESIEPKSLGLEMPKDVHSENVLRDSLEINRKIIDGRERGEFFNWALYTAGVLLYAAGECESVEEGVGRVEKEST.

It belongs to the anthranilate phosphoribosyltransferase family.

This is an uncharacterized protein from Aquifex aeolicus (strain VF5).